A 181-amino-acid polypeptide reads, in one-letter code: Oligoribonuclease (181 aa).

Positions 8–171 constitute an Exonuclease domain; sequence LIWVDLEMTG…DDIRESIAEL (164 aa). Y129 is a catalytic residue.

This sequence belongs to the oligoribonuclease family.

Its subcellular location is the cytoplasm. Functionally, 3'-to-5' exoribonuclease specific for small oligoribonucleotides. This Aliivibrio fischeri (strain ATCC 700601 / ES114) (Vibrio fischeri) protein is Oligoribonuclease.